The primary structure comprises 176 residues: UBA-like domain-containing protein 1 (176 aa).

Composition is skewed to low complexity over residues 88-105 and 120-137; these read ESFH…TSAT and TPSW…QHLQ. Residues 88 to 176 form a disordered region; that stretch reads ESFHSGGSSG…RAHPAMEAER (89 aa). The segment covering 138 to 150 has biased composition (pro residues); the sequence is PQPPLWTPAPPSP. Residues 166–176 are compositionally biased toward basic and acidic residues; the sequence is PRAHPAMEAER.

This sequence belongs to the UBALD family.

The protein is UBA-like domain-containing protein 1 (Ubald1) of Rattus norvegicus (Rat).